Here is a 162-residue protein sequence, read N- to C-terminus: NADH-quinone oxidoreductase subunit I (162 aa).

2 4Fe-4S ferredoxin-type domains span residues 53-83 and 93-122; these read LRRY…IESE and TRYD…ETHI. [4Fe-4S] cluster contacts are provided by C63, C66, C69, C73, C102, C105, C108, and C112.

The protein belongs to the complex I 23 kDa subunit family. NDH-1 is composed of 14 different subunits. Subunits NuoA, H, J, K, L, M, N constitute the membrane sector of the complex. The cofactor is [4Fe-4S] cluster.

It is found in the cell inner membrane. It catalyses the reaction a quinone + NADH + 5 H(+)(in) = a quinol + NAD(+) + 4 H(+)(out). In terms of biological role, NDH-1 shuttles electrons from NADH, via FMN and iron-sulfur (Fe-S) centers, to quinones in the respiratory chain. The immediate electron acceptor for the enzyme in this species is believed to be ubiquinone. Couples the redox reaction to proton translocation (for every two electrons transferred, four hydrogen ions are translocated across the cytoplasmic membrane), and thus conserves the redox energy in a proton gradient. The chain is NADH-quinone oxidoreductase subunit I from Bordetella bronchiseptica (strain ATCC BAA-588 / NCTC 13252 / RB50) (Alcaligenes bronchisepticus).